The following is a 147-amino-acid chain: Large ribosomal subunit protein bL9 (147 aa).

It belongs to the bacterial ribosomal protein bL9 family.

In terms of biological role, binds to the 23S rRNA. In Citrifermentans bemidjiense (strain ATCC BAA-1014 / DSM 16622 / JCM 12645 / Bem) (Geobacter bemidjiensis), this protein is Large ribosomal subunit protein bL9.